A 101-amino-acid chain; its full sequence is C-X-C motif chemokine 3 (101 aa).

Residues 1–32 (MAPPTRRLLNAALLLLLLLMATSHQPSGTVVA) form the signal peptide. 2 disulfides stabilise this stretch: cysteine 37–cysteine 63 and cysteine 39–cysteine 79.

The protein belongs to the intercrine alpha (chemokine CxC) family.

Its subcellular location is the secreted. Its function is as follows. Ligand for CXCR2. Has chemotactic activity for neutrophils. May play a role in inflammation and exert its effects on endothelial cells in an autocrine fashion. The chain is C-X-C motif chemokine 3 (Cxcl3) from Rattus norvegicus (Rat).